The chain runs to 465 residues: Adenosylhomocysteinase (465 aa).

The substrate site is built by threonine 56, aspartate 131, and glutamate 191. 192–194 is an NAD(+) binding site; sequence TTT. Substrate is bound by residues lysine 221 and aspartate 225. NAD(+) is bound by residues asparagine 226, 255–260, glutamate 278, asparagine 313, 334–336, and asparagine 379; these read GYGDVG and IGH.

The protein belongs to the adenosylhomocysteinase family. It depends on NAD(+) as a cofactor.

It localises to the cytoplasm. The enzyme catalyses S-adenosyl-L-homocysteine + H2O = L-homocysteine + adenosine. Its pathway is amino-acid biosynthesis; L-homocysteine biosynthesis; L-homocysteine from S-adenosyl-L-homocysteine: step 1/1. May play a key role in the regulation of the intracellular concentration of adenosylhomocysteine. The chain is Adenosylhomocysteinase from Bartonella henselae (strain ATCC 49882 / DSM 28221 / CCUG 30454 / Houston 1) (Rochalimaea henselae).